Here is a 154-residue protein sequence, read N- to C-terminus: Endoribonuclease YbeY (154 aa).

Zn(2+) contacts are provided by His114, His118, and His124.

This sequence belongs to the endoribonuclease YbeY family. The cofactor is Zn(2+).

It is found in the cytoplasm. In terms of biological role, single strand-specific metallo-endoribonuclease involved in late-stage 70S ribosome quality control and in maturation of the 3' terminus of the 16S rRNA. This chain is Endoribonuclease YbeY, found in Marinomonas sp. (strain MWYL1).